Consider the following 388-residue polypeptide: Formate-dependent phosphoribosylglycinamide formyltransferase (388 aa).

N(1)-(5-phospho-beta-D-ribosyl)glycinamide-binding positions include 20 to 21 (EL) and glutamate 80. ATP is bound by residues arginine 112, lysine 153, 158 to 163 (SSGKGQ), 193 to 196 (EEFI), and glutamate 201. In terms of domain architecture, ATP-grasp spans 117-306 (RLAFEKLGLR…EFEIHARAIL (190 aa)). Mg(2+) contacts are provided by glutamate 265 and glutamate 277. N(1)-(5-phospho-beta-D-ribosyl)glycinamide contacts are provided by residues aspartate 284, lysine 352, and 359 to 360 (RR).

Belongs to the PurK/PurT family. In terms of assembly, homodimer.

It carries out the reaction N(1)-(5-phospho-beta-D-ribosyl)glycinamide + formate + ATP = N(2)-formyl-N(1)-(5-phospho-beta-D-ribosyl)glycinamide + ADP + phosphate + H(+). The protein operates within purine metabolism; IMP biosynthesis via de novo pathway; N(2)-formyl-N(1)-(5-phospho-D-ribosyl)glycinamide from N(1)-(5-phospho-D-ribosyl)glycinamide (formate route): step 1/1. Involved in the de novo purine biosynthesis. Catalyzes the transfer of formate to 5-phospho-ribosyl-glycinamide (GAR), producing 5-phospho-ribosyl-N-formylglycinamide (FGAR). Formate is provided by PurU via hydrolysis of 10-formyl-tetrahydrofolate. The protein is Formate-dependent phosphoribosylglycinamide formyltransferase of Methanococcus maripaludis (strain C7 / ATCC BAA-1331).